Reading from the N-terminus, the 308-residue chain is Ornithine carbamoyltransferase (308 aa).

Residues 51–54, Gln78, Arg102, and 129–132 contribute to the carbamoyl phosphate site; these read STRT and HPTQ. Residues Asn160, Asp224, and 228–229 contribute to the L-ornithine site; that span reads SM. Residues 264 to 265 and Arg292 each bind carbamoyl phosphate; that span reads CL.

This sequence belongs to the aspartate/ornithine carbamoyltransferase superfamily. OTCase family.

It localises to the cytoplasm. The enzyme catalyses carbamoyl phosphate + L-ornithine = L-citrulline + phosphate + H(+). The protein operates within amino-acid biosynthesis; L-arginine biosynthesis; L-arginine from L-ornithine and carbamoyl phosphate: step 1/3. Functionally, reversibly catalyzes the transfer of the carbamoyl group from carbamoyl phosphate (CP) to the N(epsilon) atom of ornithine (ORN) to produce L-citrulline. The chain is Ornithine carbamoyltransferase from Caldicellulosiruptor saccharolyticus (strain ATCC 43494 / DSM 8903 / Tp8T 6331).